The following is a 201-amino-acid chain: Large ribosomal subunit protein uL4 (201 aa).

The disordered stretch occupies residues 43-73; sequence TRAQKTRSEVSGGGAKPWRQKGTGRARAGTT.

This sequence belongs to the universal ribosomal protein uL4 family. As to quaternary structure, part of the 50S ribosomal subunit.

Its function is as follows. One of the primary rRNA binding proteins, this protein initially binds near the 5'-end of the 23S rRNA. It is important during the early stages of 50S assembly. It makes multiple contacts with different domains of the 23S rRNA in the assembled 50S subunit and ribosome. Functionally, forms part of the polypeptide exit tunnel. The chain is Large ribosomal subunit protein uL4 from Colwellia psychrerythraea (strain 34H / ATCC BAA-681) (Vibrio psychroerythus).